A 235-amino-acid chain; its full sequence is Peptidase E (235 aa).

Catalysis depends on charge relay system residues Ser-122, Asp-137, and His-159.

It belongs to the peptidase S51 family.

Its subcellular location is the cytoplasm. The enzyme catalyses Dipeptidase E catalyzes the hydrolysis of dipeptides Asp-|-Xaa. It does not act on peptides with N-terminal Glu, Asn or Gln, nor does it cleave isoaspartyl peptides.. In terms of biological role, hydrolyzes dipeptides containing N-terminal aspartate residues. May play a role in allowing the cell to use peptide aspartate to spare carbon otherwise required for the synthesis of the aspartate family of amino acids. This is Peptidase E from Shewanella denitrificans (strain OS217 / ATCC BAA-1090 / DSM 15013).